Here is a 460-residue protein sequence, read N- to C-terminus: Argininosuccinate lyase (460 aa).

The protein belongs to the lyase 1 family. Argininosuccinate lyase subfamily.

The protein localises to the cytoplasm. The enzyme catalyses 2-(N(omega)-L-arginino)succinate = fumarate + L-arginine. It functions in the pathway amino-acid biosynthesis; L-arginine biosynthesis; L-arginine from L-ornithine and carbamoyl phosphate: step 3/3. This Streptococcus uberis (strain ATCC BAA-854 / 0140J) protein is Argininosuccinate lyase.